A 157-amino-acid polypeptide reads, in one-letter code: Mini-ribonuclease 3 (157 aa).

Asp-18 is a catalytic residue. Residues 126-157 form a disordered region; sequence EEDEGKGKGETAKEEESITDALSPAEQSEIDC. Residues 130 to 141 show a composition bias toward basic and acidic residues; that stretch reads GKGKGETAKEEE.

It belongs to the MrnC RNase family. As to quaternary structure, homodimer. Mg(2+) serves as cofactor.

It localises to the cytoplasm. Its function is as follows. Involved in correct processing of both the 5' and 3' ends of 23S rRNA precursor. Processes 30S rRNA precursor transcript even in absence of ribonuclease 3 (Rnc); Rnc processes 30S rRNA into smaller rRNA precursors. The chain is Mini-ribonuclease 3 from Desulfitobacterium hafniense (strain Y51).